Here is a 114-residue protein sequence, read N- to C-terminus: Ig heavy chain V region GOM (114 aa).

The Ig-like domain occupies 1 to 112 (EVQLVESGGD…YWGQGTLVTV (112 aa)).

This chain is Ig heavy chain V region GOM, found in Canis lupus familiaris (Dog).